We begin with the raw amino-acid sequence, 874 residues long: Valine--tRNA ligase (874 aa).

A 'HIGH' region motif is present at residues 51–61 (PNVTGVLHIGH). A 'KMSKS' region motif is present at residues 533–537 (KMSKS). Lysine 536 contributes to the ATP binding site. The stretch at 813 to 873 (LVARLKKQLE…IKQELDLLEQ (61 aa)) forms a coiled coil.

This sequence belongs to the class-I aminoacyl-tRNA synthetase family. ValS type 1 subfamily. In terms of assembly, monomer.

The protein resides in the cytoplasm. The catalysed reaction is tRNA(Val) + L-valine + ATP = L-valyl-tRNA(Val) + AMP + diphosphate. Catalyzes the attachment of valine to tRNA(Val). As ValRS can inadvertently accommodate and process structurally similar amino acids such as threonine, to avoid such errors, it has a 'posttransfer' editing activity that hydrolyzes mischarged Thr-tRNA(Val) in a tRNA-dependent manner. This is Valine--tRNA ligase from Helicobacter pylori (strain ATCC 700392 / 26695) (Campylobacter pylori).